The primary structure comprises 822 residues: MSSKTWDDDFVRQVPSFQWIIDQSLEDEVEAASLQVQEPADGVAIDGSLASFKLAIAPLEIGGVFDPPFDRVRWGSICDTVQQMVQQFTDRPLIPQAEMARMLYLDIPGSFVLEDEIDDWYPEDTSDGYGVSFAADEDHASDLKLASDSSNCEIEEVRVTGDTPKELTLGDRYMGIDEEFQTTNTDYDITLQIMNPIEHRVSRVIDTHCHPDNPDISTGPIYMERVSLARTEATSHSILPTHAYFDDSYHQALVENGDYSMDFDRIRLKQSDVDWYRDPDKYFQPKMNIGSAQRRVGTQKEVLTALKKRNADVPEMGDAINMKDTAKAIAKRFRSTFLNVDGEDCLRASMDVMTKCLEYHKKWGKHMDLQGVNVAAETDLCRYQHMLKSDVKPVVTDTLHLERAVAATITFHSKGVTSNFSPFFTACFEKLSLALKSRFIVPIGKISSLELKNVRLNNRYFLEADLSKFDKSQGELHLEFQREILLALGFPAPLTNWWSDFHRDSYLSDPHAKVGMSVSFQRRTGDAFTYFGNTLVTMAMIAYASDLSDCDCAIFSGDDSLIISKVKPVLDTDMFTSLFNMEIKVMDPSVPYVCSKFLVETEMGNLVSVPDPLREIQRLAKRKILRDEQMLRAHFVSFCDRMKFINQLDEKMITTLCHFVYLKYGKEKPWIFEEVRAALAAFSLYSENFLRFSDCYCTEGIRVYQMSDPVCKFKRTTEERKTDGDWFHNWKNPKFPGVLDKVYRTIGIYSSDCSTKELPVKRIGRLHEALERESLKLANDRRTTQRLKKKVDDYATGRGGLTSVDALLVKSHCETFKPSDLR.

A RdRp catalytic domain is found at 459-572 (RYFLEADLSK…ISKVKPVLDT (114 aa)).

The protein belongs to the ssRNA positive-strand viruses RNA-directed RNA polymerase family. As to quaternary structure, interacts with replication protein 1a.

It carries out the reaction RNA(n) + a ribonucleoside 5'-triphosphate = RNA(n+1) + diphosphate. Its function is as follows. RNA-dependent RNA polymerase which replicates the viral genome composed of 3 RNA segments, RNA1, RNA2 and RNA3. The protein is RNA-directed RNA polymerase 2a of Bromus inermis (Smooth brome grass).